The chain runs to 293 residues: 4-diphosphocytidyl-2-C-methyl-D-erythritol kinase (293 aa).

The active site involves K16. ATP is bound at residue 99 to 109; that stretch reads PMGAGLGGGSS. Residue D141 is part of the active site.

Belongs to the GHMP kinase family. IspE subfamily.

The enzyme catalyses 4-CDP-2-C-methyl-D-erythritol + ATP = 4-CDP-2-C-methyl-D-erythritol 2-phosphate + ADP + H(+). Its pathway is isoprenoid biosynthesis; isopentenyl diphosphate biosynthesis via DXP pathway; isopentenyl diphosphate from 1-deoxy-D-xylulose 5-phosphate: step 3/6. Catalyzes the phosphorylation of the position 2 hydroxy group of 4-diphosphocytidyl-2C-methyl-D-erythritol. This Burkholderia cenocepacia (strain HI2424) protein is 4-diphosphocytidyl-2-C-methyl-D-erythritol kinase.